Consider the following 291-residue polypeptide: Elongation factor Ts (291 aa).

The interval 80–83 (TDFV) is involved in Mg(2+) ion dislocation from EF-Tu.

It belongs to the EF-Ts family.

The protein localises to the cytoplasm. Its function is as follows. Associates with the EF-Tu.GDP complex and induces the exchange of GDP to GTP. It remains bound to the aminoacyl-tRNA.EF-Tu.GTP complex up to the GTP hydrolysis stage on the ribosome. This is Elongation factor Ts from Limosilactobacillus reuteri (strain DSM 20016) (Lactobacillus reuteri).